A 700-amino-acid chain; its full sequence is Translation initiation factor IF-2 (700 aa).

The interval 58 to 85 (KKEVKKQKEPSKEKGKSSEQVKVKEKSK) is disordered. In terms of domain architecture, tr-type G spans 191-365 (PRPPVVTIMG…EMQEIRCIPD (175 aa)). The interval 200-207 (GHVDHGKT) is G1. 200 to 207 (GHVDHGKT) provides a ligand contact to GTP. Positions 225–229 (GITQS) are G2. The interval 246 to 249 (DTPG) is G3. Residues 246 to 250 (DTPGH) and 300 to 303 (NKID) each bind GTP. A G4 region spans residues 300-303 (NKID). A G5 region spans residues 337–339 (SAK).

Belongs to the TRAFAC class translation factor GTPase superfamily. Classic translation factor GTPase family. IF-2 subfamily.

It localises to the cytoplasm. In terms of biological role, one of the essential components for the initiation of protein synthesis. Protects formylmethionyl-tRNA from spontaneous hydrolysis and promotes its binding to the 30S ribosomal subunits. Also involved in the hydrolysis of GTP during the formation of the 70S ribosomal complex. This Petrotoga mobilis (strain DSM 10674 / SJ95) protein is Translation initiation factor IF-2.